Here is a 445-residue protein sequence, read N- to C-terminus: GTPase Der (445 aa).

EngA-type G domains lie at 3 to 167 (PVIA…YAGQ) and 180 to 353 (IKIA…AAAM). GTP contacts are provided by residues 9–16 (GRPNVGKS), 56–60 (DTGGF), 119–122 (NKAE), 186–193 (GRPNVGKS), 233–237 (DTAGL), and 298–301 (NKWD). One can recognise a KH-like domain in the interval 354–438 (SKLPTPKLTR…PLRIEFRSSN (85 aa)).

Belongs to the TRAFAC class TrmE-Era-EngA-EngB-Septin-like GTPase superfamily. EngA (Der) GTPase family. As to quaternary structure, associates with the 50S ribosomal subunit.

Functionally, GTPase that plays an essential role in the late steps of ribosome biogenesis. In Burkholderia cenocepacia (strain ATCC BAA-245 / DSM 16553 / LMG 16656 / NCTC 13227 / J2315 / CF5610) (Burkholderia cepacia (strain J2315)), this protein is GTPase Der.